Consider the following 1256-residue polypeptide: Bifunctional autolysin (1256 aa).

The N-terminal stretch at 1–29 (MAKKFNYKLPSMVALTLVGSAVTAHQVQA) is a signal peptide. Polar residues predominate over residues 103–138 (GDTRANQSATTNNTQPVAKSTSTTAPKTNTNVTNAG). 3 disordered regions span residues 103 to 151 (GDTR…NSEN), 172 to 219 (KTAA…KYKP), and 419 to 440 (TQST…PSTG). Composition is skewed to low complexity over residues 172-196 (KTAA…KVTT) and 421-439 (STTT…KPST). Residues 199 to 775 (ASAQPRSVAA…AVAQPKTAVK (577 aa)) are N-acetylmuramoyl-L-alanine amidase. GW domains are found at residues 443–517 (TVAA…YNTA), 519–593 (SPVN…DTAK), 612–686 (TVSS…YNNA), 688–762 (SPVN…VPAA), 784–859 (TTQT…VQNL), 861–936 (KEVK…APTA), and 943–1017 (AAKD…KELI). Residues 776–1256 (AYTVTKPQTT…GKYFDIPQYK (481 aa)) form an endo-beta-N-acetylglucosaminidase region.

It in the N-terminal section; belongs to the N-acetylmuramoyl-L-alanine amidase 2 family. In the C-terminal section; belongs to the glycosyl hydrolase 73 family. In terms of assembly, oligomer; forms a ring structure at the cell surface which is important for efficient partitioning of daughter cells after cell division. In terms of processing, undergoes proteolytic processing to generate the two extracellular lytic enzymes, probably at the septal region on the cell surface.

The protein localises to the secreted. The enzyme catalyses Hydrolyzes the link between N-acetylmuramoyl residues and L-amino acid residues in certain cell-wall glycopeptides.. It carries out the reaction an N(4)-(oligosaccharide-(1-&gt;3)-[oligosaccharide-(1-&gt;6)]-beta-D-Man-(1-&gt;4)-beta-D-GlcNAc-(1-&gt;4)-alpha-D-GlcNAc)-L-asparaginyl-[protein] + H2O = an oligosaccharide-(1-&gt;3)-[oligosaccharide-(1-&gt;6)]-beta-D-Man-(1-&gt;4)-D-GlcNAc + N(4)-(N-acetyl-beta-D-glucosaminyl)-L-asparaginyl-[protein]. In terms of biological role, endohydrolysis of the di-N-acetylchitobiosyl unit in high-mannose glycopeptides and glycoproteins containing the -[(Man)5(GlcNAc)2]-Asn structure. One N-acetyl-D-glucosamine residue remains attached to the protein; the rest of the oligosaccharide is released intact. Cleaves the peptidoglycan connecting the daughter cells at the end of the cell division cycle, resulting in the separation of the two newly divided cells. Acts as an autolysin in penicillin-induced lysis. The chain is Bifunctional autolysin (atl) from Staphylococcus aureus (strain COL).